A 182-amino-acid polypeptide reads, in one-letter code: Probable RNA 2'-phosphotransferase (182 aa).

The protein belongs to the KptA/TPT1 family.

Functionally, removes the 2'-phosphate from RNA via an intermediate in which the phosphate is ADP-ribosylated by NAD followed by a presumed transesterification to release the RNA and generate ADP-ribose 1''-2''-cyclic phosphate (APPR&gt;P). May function as an ADP-ribosylase. This Herpetosiphon aurantiacus (strain ATCC 23779 / DSM 785 / 114-95) protein is Probable RNA 2'-phosphotransferase.